Here is a 1407-residue protein sequence, read N- to C-terminus: DNA-directed RNA polymerase subunit beta' (1407 aa).

4 residues coordinate Zn(2+): cysteine 70, cysteine 72, cysteine 85, and cysteine 88. 3 residues coordinate Mg(2+): aspartate 460, aspartate 462, and aspartate 464. Zn(2+)-binding residues include cysteine 814, cysteine 888, cysteine 895, and cysteine 898.

The protein belongs to the RNA polymerase beta' chain family. As to quaternary structure, the RNAP catalytic core consists of 2 alpha, 1 beta, 1 beta' and 1 omega subunit. When a sigma factor is associated with the core the holoenzyme is formed, which can initiate transcription. Mg(2+) is required as a cofactor. It depends on Zn(2+) as a cofactor.

The enzyme catalyses RNA(n) + a ribonucleoside 5'-triphosphate = RNA(n+1) + diphosphate. In terms of biological role, DNA-dependent RNA polymerase catalyzes the transcription of DNA into RNA using the four ribonucleoside triphosphates as substrates. The polypeptide is DNA-directed RNA polymerase subunit beta' (Salmonella paratyphi A (strain ATCC 9150 / SARB42)).